The chain runs to 127 residues: Lysozyme C (127 aa).

Residues Lys1–Cys127 form the C-type lysozyme domain. 4 disulfide bridges follow: Cys6/Cys127, Cys30/Cys115, Cys64/Cys80, and Cys76/Cys94. Active-site residues include Glu35 and Asp52. Residues Lys82, Asp85, Asn87, Asp90, and Asp91 each contribute to the Ca(2+) site.

It belongs to the glycosyl hydrolase 22 family. Monomer. Ca(2+) is required as a cofactor.

The protein resides in the secreted. The catalysed reaction is Hydrolysis of (1-&gt;4)-beta-linkages between N-acetylmuramic acid and N-acetyl-D-glucosamine residues in a peptidoglycan and between N-acetyl-D-glucosamine residues in chitodextrins.. Functionally, lysozymes have primarily a bacteriolytic function; those in tissues and body fluids are associated with the monocyte-macrophage system and enhance the activity of immunoagents. This chain is Lysozyme C (LYZ), found in Columba livia (Rock dove).